Here is an 89-residue protein sequence, read N- to C-terminus: Protein FAM25A (89 aa).

It belongs to the FAM25 family.

The protein is Protein FAM25A of Homo sapiens (Human).